Reading from the N-terminus, the 264-residue chain is Acyl-[acyl-carrier-protein]--UDP-N-acetylglucosamine O-acyltransferase (264 aa).

This sequence belongs to the transferase hexapeptide repeat family. LpxA subfamily. Homotrimer.

It localises to the cytoplasm. The catalysed reaction is a (3R)-hydroxyacyl-[ACP] + UDP-N-acetyl-alpha-D-glucosamine = a UDP-3-O-[(3R)-3-hydroxyacyl]-N-acetyl-alpha-D-glucosamine + holo-[ACP]. The protein operates within glycolipid biosynthesis; lipid IV(A) biosynthesis; lipid IV(A) from (3R)-3-hydroxytetradecanoyl-[acyl-carrier-protein] and UDP-N-acetyl-alpha-D-glucosamine: step 1/6. In terms of biological role, involved in the biosynthesis of lipid A, a phosphorylated glycolipid that anchors the lipopolysaccharide to the outer membrane of the cell. The protein is Acyl-[acyl-carrier-protein]--UDP-N-acetylglucosamine O-acyltransferase of Rickettsia felis (strain ATCC VR-1525 / URRWXCal2) (Rickettsia azadi).